The following is a 181-amino-acid chain: Large ribosomal subunit protein uL5 (181 aa).

The protein belongs to the universal ribosomal protein uL5 family. In terms of assembly, part of the 50S ribosomal subunit; part of the 5S rRNA/L5/L18/L25 subcomplex. Contacts the 5S rRNA and the P site tRNA. Forms a bridge to the 30S subunit in the 70S ribosome.

In terms of biological role, this is one of the proteins that bind and probably mediate the attachment of the 5S RNA into the large ribosomal subunit, where it forms part of the central protuberance. In the 70S ribosome it contacts protein S13 of the 30S subunit (bridge B1b), connecting the 2 subunits; this bridge is implicated in subunit movement. Contacts the P site tRNA; the 5S rRNA and some of its associated proteins might help stabilize positioning of ribosome-bound tRNAs. The chain is Large ribosomal subunit protein uL5 from Helicobacter pylori (strain P12).